The primary structure comprises 78 residues: MARRCGLCGKGTISGCAVSKSMHHCKRVWKPNLLAVRVVVDGSALNMRICARCLRSNPLMKKAQPRANAPLRAAAPKL.

Belongs to the bacterial ribosomal protein bL28 family.

This Treponema pallidum (strain Nichols) protein is Large ribosomal subunit protein bL28 (rpmB).